The chain runs to 495 residues: F(420)H(2) dehydrogenase subunit M (495 aa).

15 consecutive transmembrane segments (helical) span residues 1-21 (MLPV…VTFF), 27-47 (LAAG…LYAY), 57-77 (MQFY…SVGI), 80-100 (VSMP…LFTW), 108-128 (NRFY…FVAL), 130-150 (FVVF…IVNL), 163-183 (FFIY…GLFY), 215-235 (IFLA…FHSW), 249-269 (ILFI…LPML), 277-297 (LMIM…ALLA), 315-335 (MGYV…GAMF), 338-358 (FSHG…QTAA), 378-398 (VAMM…GFIA), 412-432 (VFVV…LWAM), and 450-470 (INSI…YFGL).

The protein belongs to the complex I subunit 4 family. As to quaternary structure, the FPO complex is composed of at least 13 different subunits. FpoA, FpoH, FpoJ, FpoK, FpoL, FpoM and FpoN proteins constitute the membrane sector of the complex.

It localises to the cell membrane. It carries out the reaction methanophenazine + reduced coenzyme F420-(gamma-L-Glu)(n) = dihydromethanophenazine + oxidized coenzyme F420-(gamma-L-Glu)(n) + H(+). Component of the F(420)H(2) dehydrogenase (FPO complex) which is part of the energy-conserving F(420)H(2):heterodisulfide oxidoreductase system. The membrane-bound electron transfer system of the complex plays an important role in the metabolism of methylotrophic methanogens when the organisms grow on methanol or methylamines. Catalyzes the oxidation of methanophenazine to dihydromethanophenazine. It shuttles electrons from F(420)H(2), via FAD and iron-sulfur (Fe-S) centers, to methanophenazine (an electron carrier in the membrane). It couples the redox reaction to proton translocation (for every two electrons transferred, two hydrogen ions are translocated across the cytoplasmic membrane), and thus conserves the redox energy in a proton gradient. It also catalyzes the oxidation of F(420)H(2) with quinones such as 2,3-dimethyl-1,4-naphthoquinone, 2-methyl-1,4-naphthoquinone and tetramethyl-p-benzoquinone. This chain is F(420)H(2) dehydrogenase subunit M (fpoM), found in Methanosarcina mazei (strain ATCC BAA-159 / DSM 3647 / Goe1 / Go1 / JCM 11833 / OCM 88) (Methanosarcina frisia).